We begin with the raw amino-acid sequence, 389 residues long: Succinate--CoA ligase [ADP-forming] subunit beta (389 aa).

Residues 9–244 enclose the ATP-grasp domain; it reads KQLLAEYGIP…KTQEDETEVT (236 aa). Residues lysine 46, 53-55, glycine 102, and glutamate 107 contribute to the ATP site; that span reads GRG. The Mg(2+) site is built by asparagine 199 and aspartate 213. Substrate-binding positions include asparagine 264 and 321-323; that span reads GIV.

It belongs to the succinate/malate CoA ligase beta subunit family. In terms of assembly, heterotetramer of two alpha and two beta subunits. Requires Mg(2+) as cofactor.

It carries out the reaction succinate + ATP + CoA = succinyl-CoA + ADP + phosphate. The enzyme catalyses GTP + succinate + CoA = succinyl-CoA + GDP + phosphate. Its pathway is carbohydrate metabolism; tricarboxylic acid cycle; succinate from succinyl-CoA (ligase route): step 1/1. Functionally, succinyl-CoA synthetase functions in the citric acid cycle (TCA), coupling the hydrolysis of succinyl-CoA to the synthesis of either ATP or GTP and thus represents the only step of substrate-level phosphorylation in the TCA. The beta subunit provides nucleotide specificity of the enzyme and binds the substrate succinate, while the binding sites for coenzyme A and phosphate are found in the alpha subunit. In Xanthomonas campestris pv. campestris (strain 8004), this protein is Succinate--CoA ligase [ADP-forming] subunit beta.